The following is a 330-amino-acid chain: Aspartate--ammonia ligase (330 aa).

It belongs to the class-II aminoacyl-tRNA synthetase family. AsnA subfamily.

The protein resides in the cytoplasm. It carries out the reaction L-aspartate + NH4(+) + ATP = L-asparagine + AMP + diphosphate + H(+). It functions in the pathway amino-acid biosynthesis; L-asparagine biosynthesis; L-asparagine from L-aspartate (ammonia route): step 1/1. This chain is Aspartate--ammonia ligase, found in Klebsiella pneumoniae (strain 342).